A 155-amino-acid polypeptide reads, in one-letter code: Transcription antitermination protein NusB (155 aa).

The protein belongs to the NusB family.

Involved in transcription antitermination. Required for transcription of ribosomal RNA (rRNA) genes. Binds specifically to the boxA antiterminator sequence of the ribosomal RNA (rrn) operons. This Vibrio parahaemolyticus serotype O3:K6 (strain RIMD 2210633) protein is Transcription antitermination protein NusB.